A 225-amino-acid chain; its full sequence is UPF0758 protein XAC3915 (225 aa).

Residues 102-224 (ALSDPPSVGR…PVSFAERGWL (123 aa)) form the MPN domain. Residues histidine 173, histidine 175, and aspartate 186 each coordinate Zn(2+). Positions 173 to 186 (HNHPSGNPEPSEAD) match the JAMM motif motif.

The protein belongs to the UPF0758 family.

The polypeptide is UPF0758 protein XAC3915 (Xanthomonas axonopodis pv. citri (strain 306)).